A 120-amino-acid chain; its full sequence is NADH-ubiquinone oxidoreductase chain 3 (120 aa).

Transmembrane regions (helical) follow at residues 6 to 26 (LLFF…LTWV), 63 to 83 (IVCV…PFFF), and 85 to 105 (FFLV…FVFY).

It belongs to the complex I subunit 3 family.

The protein localises to the mitochondrion membrane. The catalysed reaction is a ubiquinone + NADH + 5 H(+)(in) = a ubiquinol + NAD(+) + 4 H(+)(out). Its function is as follows. Core subunit of the mitochondrial membrane respiratory chain NADH dehydrogenase (Complex I) that is believed to belong to the minimal assembly required for catalysis. Complex I functions in the transfer of electrons from NADH to the respiratory chain. The immediate electron acceptor for the enzyme is believed to be ubiquinone. The chain is NADH-ubiquinone oxidoreductase chain 3 (ND3) from Paramecium tetraurelia.